The chain runs to 287 residues: ATP synthase gamma chain (287 aa).

Belongs to the ATPase gamma chain family. As to quaternary structure, F-type ATPases have 2 components, CF(1) - the catalytic core - and CF(0) - the membrane proton channel. CF(1) has five subunits: alpha(3), beta(3), gamma(1), delta(1), epsilon(1). CF(0) has three main subunits: a, b and c.

It is found in the cell membrane. Its function is as follows. Produces ATP from ADP in the presence of a proton gradient across the membrane. The gamma chain is believed to be important in regulating ATPase activity and the flow of protons through the CF(0) complex. In Geobacillus stearothermophilus (Bacillus stearothermophilus), this protein is ATP synthase gamma chain.